We begin with the raw amino-acid sequence, 312 residues long: Olfactory receptor 2M3 (312 aa).

Residues 1-25 (MARENSTFNSDFILLGIFNHSPTHT) lie on the Extracellular side of the membrane. Residue asparagine 5 is glycosylated (N-linked (GlcNAc...) asparagine). The helical transmembrane segment at 26–49 (FLFFLVLAIFSVAFMGNSVMVLLI) threads the bilayer. At 50-57 (YLDTQLHT) the chain is on the cytoplasmic side. The chain crosses the membrane as a helical span at residues 58–79 (PMYLLLSQLSLMDLMLICTTVP). The Extracellular segment spans residues 80-100 (KMAFNYLSGSKSISMAGCATQ). An intrachain disulfide couples cysteine 97 to cysteine 189. A helical transmembrane segment spans residues 101–120 (IFFYTSLLGSECFLLAVMAY). The Cytoplasmic segment spans residues 121–139 (DRYTAICHPLRYTNLMSPK). The chain crosses the membrane as a helical span at residues 140–158 (ICGLMTAFSWILGSTDGII). The Extracellular portion of the chain corresponds to 159-195 (DVVATFSFSYCGSREIAHFFCDFPSLLILSCSDTSIF). The helical transmembrane segment at 196-219 (EKILFICCIVMIVFPVAIIIASYA) threads the bilayer. Residues 220–236 (RVILAVIHMGSGEGRRK) are Cytoplasmic-facing. The helical transmembrane segment at 237–259 (AFTTCSSHLLVVGMYYGAALFMY) threads the bilayer. The Extracellular portion of the chain corresponds to 260–272 (IRPTSDRSPTQDK). A helical membrane pass occupies residues 273–292 (MVSVFYTILTPMLNPLIYSL). Over 293-312 (RNKEVTRAFMKILGKGKSGE) the chain is Cytoplasmic.

This sequence belongs to the G-protein coupled receptor 1 family.

It is found in the cell membrane. In terms of biological role, odorant receptor. The sequence is that of Olfactory receptor 2M3 (OR2M3) from Homo sapiens (Human).